Reading from the N-terminus, the 530-residue chain is Ubiquitin carboxyl-terminal hydrolase 17-like protein 24 (530 aa).

In terms of domain architecture, USP spans 80–375 (AGLQNMGNTC…QAYVLFYIQK (296 aa)). The active-site Nucleophile is cysteine 89. The Proton acceptor role is filled by histidine 334. Composition is skewed to basic and acidic residues over residues 382 to 392 (SESVSRGREPR) and 398 to 412 (DTDR…KRDH). 2 disordered regions span residues 382-412 (SESV…KRDH) and 477-530 (NHHP…LVCQ). The segment covering 493–505 (TPTHQESMNTGTL) has biased composition (polar residues). Basic residues predominate over residues 510–524 (GRARRSKGKNKHSKR).

The protein belongs to the peptidase C19 family. USP17 subfamily. Expressed in heart, brain, liver and skeletal muscle.

The protein localises to the nucleus. It localises to the nucleolus. The protein resides in the endoplasmic reticulum. It carries out the reaction Thiol-dependent hydrolysis of ester, thioester, amide, peptide and isopeptide bonds formed by the C-terminal Gly of ubiquitin (a 76-residue protein attached to proteins as an intracellular targeting signal).. Its function is as follows. Deubiquitinating enzyme that removes conjugated ubiquitin from specific proteins to regulate different cellular processes that may include cell proliferation, progression through the cell cycle, apoptosis, cell migration, and the cellular response to viral infection. This is Ubiquitin carboxyl-terminal hydrolase 17-like protein 24 (USP17L24) from Homo sapiens (Human).